The following is a 159-amino-acid chain: Large ribosomal subunit protein uL10 (159 aa).

The protein belongs to the universal ribosomal protein uL10 family. Part of the ribosomal stalk of the 50S ribosomal subunit. The N-terminus interacts with L11 and the large rRNA to form the base of the stalk. The C-terminus forms an elongated spine to which L12 dimers bind in a sequential fashion forming a multimeric L10(L12)X complex.

Forms part of the ribosomal stalk, playing a central role in the interaction of the ribosome with GTP-bound translation factors. The polypeptide is Large ribosomal subunit protein uL10 (rplJ) (Campylobacter jejuni subsp. jejuni serotype O:2 (strain ATCC 700819 / NCTC 11168)).